A 310-amino-acid chain; its full sequence is Aspartate carbamoyltransferase catalytic subunit (310 aa).

Positions 58 and 59 each coordinate carbamoyl phosphate. An L-aspartate-binding site is contributed by Lys-86. Positions 108, 136, and 139 each coordinate carbamoyl phosphate. 2 residues coordinate L-aspartate: Arg-169 and Arg-224. Positions 265 and 266 each coordinate carbamoyl phosphate.

It belongs to the aspartate/ornithine carbamoyltransferase superfamily. ATCase family. As to quaternary structure, heterododecamer (2C3:3R2) of six catalytic PyrB chains organized as two trimers (C3), and six regulatory PyrI chains organized as three dimers (R2).

It catalyses the reaction carbamoyl phosphate + L-aspartate = N-carbamoyl-L-aspartate + phosphate + H(+). Its pathway is pyrimidine metabolism; UMP biosynthesis via de novo pathway; (S)-dihydroorotate from bicarbonate: step 2/3. Catalyzes the condensation of carbamoyl phosphate and aspartate to form carbamoyl aspartate and inorganic phosphate, the committed step in the de novo pyrimidine nucleotide biosynthesis pathway. The protein is Aspartate carbamoyltransferase catalytic subunit of Trichlorobacter lovleyi (strain ATCC BAA-1151 / DSM 17278 / SZ) (Geobacter lovleyi).